Consider the following 236-residue polypeptide: Cancer/testis antigen 55 (236 aa).

Residues 57–84 form a disordered region; it reads RSSADVETGDNPLKAEPNLPAAVEEQSP.

Interacts with GABARAP; this interaction may be important for GABARAP protein stability. Interacts with LAMP2; this interaction may be important for LAMP2 protein stability. As to expression, expressed in spermatozoa (at protein level).

The protein resides in the cytoplasm. It is found in the cytoplasmic vesicle. It localises to the secretory vesicle. Its subcellular location is the acrosome. The protein localises to the cell projection. The protein resides in the cilium. It is found in the flagellum. Functionally, plays a role in spermatogenesis, possibly acting in the regulation of the autophagy pathway. The chain is Cancer/testis antigen 55 (Ct55) from Mus musculus (Mouse).